Here is a 420-residue protein sequence, read N- to C-terminus: Dihydrolipoyllysine-residue succinyltransferase component of 2-oxoglutarate dehydrogenase complex (420 aa).

The Lipoyl-binding domain occupies 1–76 (MAEVKVPELA…EVGQAVAVVG (76 aa)). Lysine 42 carries the post-translational modification N6-lipoyllysine. The interval 75 to 199 (VGEGQVNTSN…IREKMSRRKK (125 aa)) is disordered. The span at 81-90 (NTSNDSSNES) shows a compositional bias: polar residues. A compositionally biased stretch (basic and acidic residues) spans 91–102 (SQKDEAKEKETP). The span at 103–127 (KQSNPNSSESENTQDNSQQRINATP) shows a compositional bias: polar residues. Residues 124-160 (NATPSARRHARKNGVDLSEVSGKGNDVLRKDDVENSQ) enclose the Peripheral subunit-binding (PSBD) domain. Residues 149–158 (DVLRKDDVEN) are compositionally biased toward basic and acidic residues. A compositionally biased stretch (low complexity) spans 159 to 174 (SQKSSSQTAKSESKSQ). Positions 175-186 (NSGSKQTNNNPS) are enriched in polar residues. Residues histidine 391 and aspartate 395 contribute to the active site.

The protein belongs to the 2-oxoacid dehydrogenase family. As to quaternary structure, forms a 24-polypeptide structural core with octahedral symmetry. Part of the 2-oxoglutarate dehydrogenase (OGDH) complex composed of E1 (2-oxoglutarate dehydrogenase), E2 (dihydrolipoamide succinyltransferase) and E3 (dihydrolipoamide dehydrogenase); the complex contains multiple copies of the three enzymatic components (E1, E2 and E3). (R)-lipoate serves as cofactor.

The enzyme catalyses N(6)-[(R)-dihydrolipoyl]-L-lysyl-[protein] + succinyl-CoA = N(6)-[(R)-S(8)-succinyldihydrolipoyl]-L-lysyl-[protein] + CoA. Its pathway is amino-acid degradation; L-lysine degradation via saccharopine pathway; glutaryl-CoA from L-lysine: step 6/6. Its function is as follows. E2 component of the 2-oxoglutarate dehydrogenase (OGDH) complex which catalyzes the second step in the conversion of 2-oxoglutarate to succinyl-CoA and CO(2). The polypeptide is Dihydrolipoyllysine-residue succinyltransferase component of 2-oxoglutarate dehydrogenase complex (odhB) (Staphylococcus epidermidis (strain ATCC 35984 / DSM 28319 / BCRC 17069 / CCUG 31568 / BM 3577 / RP62A)).